The primary structure comprises 112 residues: Cell cycle protein GpsB (112 aa).

Residues 38–72 (IKDYEAFHKEFEQLKQQNARLKRELEEQKLVATQV) adopt a coiled-coil conformation.

The protein belongs to the GpsB family. As to quaternary structure, forms polymers through the coiled coil domains. Interacts with PBP1, MreC and EzrA.

It is found in the cytoplasm. Functionally, divisome component that associates with the complex late in its assembly, after the Z-ring is formed, and is dependent on DivIC and PBP2B for its recruitment to the divisome. Together with EzrA, is a key component of the system that regulates PBP1 localization during cell cycle progression. Its main role could be the removal of PBP1 from the cell pole after pole maturation is completed. Also contributes to the recruitment of PBP1 to the division complex. Not essential for septum formation. This is Cell cycle protein GpsB from Bacillus cereus (strain ZK / E33L).